Reading from the N-terminus, the 156-residue chain is 6,7-dimethyl-8-ribityllumazine synthase (156 aa).

5-amino-6-(D-ribitylamino)uracil contacts are provided by residues phenylalanine 23, 57–59 (AYE), and 81–83 (AII). Residue 86-87 (GT) participates in (2S)-2-hydroxy-3-oxobutyl phosphate binding. Catalysis depends on histidine 89, which acts as the Proton donor. Residue phenylalanine 114 participates in 5-amino-6-(D-ribitylamino)uracil binding. Position 128 (arginine 128) interacts with (2S)-2-hydroxy-3-oxobutyl phosphate.

It belongs to the DMRL synthase family.

It catalyses the reaction (2S)-2-hydroxy-3-oxobutyl phosphate + 5-amino-6-(D-ribitylamino)uracil = 6,7-dimethyl-8-(1-D-ribityl)lumazine + phosphate + 2 H2O + H(+). It participates in cofactor biosynthesis; riboflavin biosynthesis; riboflavin from 2-hydroxy-3-oxobutyl phosphate and 5-amino-6-(D-ribitylamino)uracil: step 1/2. Functionally, catalyzes the formation of 6,7-dimethyl-8-ribityllumazine by condensation of 5-amino-6-(D-ribitylamino)uracil with 3,4-dihydroxy-2-butanone 4-phosphate. This is the penultimate step in the biosynthesis of riboflavin. The polypeptide is 6,7-dimethyl-8-ribityllumazine synthase (Helicobacter pylori (strain HPAG1)).